Reading from the N-terminus, the 216-residue chain is Somatotropin (216 aa).

The first 26 residues, Met1–Ala26, serve as a signal peptide directing secretion. His45 provides a ligand contact to Zn(2+). Cys78 and Cys189 are oxidised to a cystine. A Phosphoserine modification is found at Ser131. Glu198 contacts Zn(2+). Residues Cys206 and Cys214 are joined by a disulfide bond.

The protein belongs to the somatotropin/prolactin family.

The protein resides in the secreted. In terms of biological role, plays an important role in growth control. Its major role in stimulating body growth is to stimulate the liver and other tissues to secrete IGF1. It stimulates both the differentiation and proliferation of myoblasts. It also stimulates amino acid uptake and protein synthesis in muscle and other tissues. The sequence is that of Somatotropin (GH1) from Oryctolagus cuniculus (Rabbit).